Reading from the N-terminus, the 490-residue chain is Aspartyl/glutamyl-tRNA(Asn/Gln) amidotransferase subunit B (490 aa).

The protein belongs to the GatB/GatE family. GatB subfamily. Heterotrimer of A, B and C subunits.

It carries out the reaction L-glutamyl-tRNA(Gln) + L-glutamine + ATP + H2O = L-glutaminyl-tRNA(Gln) + L-glutamate + ADP + phosphate + H(+). The enzyme catalyses L-aspartyl-tRNA(Asn) + L-glutamine + ATP + H2O = L-asparaginyl-tRNA(Asn) + L-glutamate + ADP + phosphate + 2 H(+). Its function is as follows. Allows the formation of correctly charged Asn-tRNA(Asn) or Gln-tRNA(Gln) through the transamidation of misacylated Asp-tRNA(Asn) or Glu-tRNA(Gln) in organisms which lack either or both of asparaginyl-tRNA or glutaminyl-tRNA synthetases. The reaction takes place in the presence of glutamine and ATP through an activated phospho-Asp-tRNA(Asn) or phospho-Glu-tRNA(Gln). The sequence is that of Aspartyl/glutamyl-tRNA(Asn/Gln) amidotransferase subunit B from Zymomonas mobilis subsp. mobilis (strain ATCC 31821 / ZM4 / CP4).